A 475-amino-acid chain; its full sequence is Methyltransferase-like protein 25B (475 aa).

A coiled-coil region spans residues 186 to 210 (QRLVERAQRLDQELLQTLEKEEKRN). The chain crosses the membrane as a helical span at residues 406 to 426 (VVAFFSLALLLAPLVETLILL).

Belongs to the METTL25 family.

It localises to the membrane. This is Methyltransferase-like protein 25B from Bos taurus (Bovine).